Here is a 531-residue protein sequence, read N- to C-terminus: Light-independent protochlorophyllide reductase subunit B (531 aa).

D36 serves as a coordination point for [4Fe-4S] cluster. D291 (proton donor) is an active-site residue. 426-427 (GL) serves as a coordination point for substrate.

It belongs to the ChlB/BchB/BchZ family. In terms of assembly, protochlorophyllide reductase is composed of three subunits; ChlL, ChlN and ChlB. Forms a heterotetramer of two ChlB and two ChlN subunits. The cofactor is [4Fe-4S] cluster.

The enzyme catalyses chlorophyllide a + oxidized 2[4Fe-4S]-[ferredoxin] + 2 ADP + 2 phosphate = protochlorophyllide a + reduced 2[4Fe-4S]-[ferredoxin] + 2 ATP + 2 H2O. Its pathway is porphyrin-containing compound metabolism; chlorophyll biosynthesis (light-independent). Functionally, component of the dark-operative protochlorophyllide reductase (DPOR) that uses Mg-ATP and reduced ferredoxin to reduce ring D of protochlorophyllide (Pchlide) to form chlorophyllide a (Chlide). This reaction is light-independent. The NB-protein (ChlN-ChlB) is the catalytic component of the complex. This is Light-independent protochlorophyllide reductase subunit B from Prochlorococcus marinus (strain MIT 9211).